Here is a 190-residue protein sequence, read N- to C-terminus: Putative histone H1.6 (190 aa).

The tract at residues 1–29 is disordered; it reads MSDVAVAETPAVKTPTKAPKANATKVPKV. Position 2 is an N-acetylserine (serine 2). Low complexity predominate over residues 9 to 29; the sequence is TPAVKTPTKAPKANATKVPKV. Residues 34–110 enclose the H15 domain; the sequence is AHPPFINMVT…GATGRFRVAE (77 aa). The disordered stretch occupies residues 141–190; the sequence is KKTGDKVKKAKSPKKIAKPAAKKATKSPSKKVAPKKAAAKPAKKTAALKA. A compositionally biased stretch (basic residues) spans 148–183; that stretch reads KKAKSPKKIAKPAAKKATKSPSKKVAPKKAAAKPAK.

This sequence belongs to the histone H1/H5 family.

It localises to the nucleus. The protein localises to the chromosome. Its function is as follows. Histones H1 are necessary for the condensation of nucleosome chains into higher-order structures. In Caenorhabditis elegans, this protein is Putative histone H1.6 (hil-6).